The chain runs to 577 residues: Chaperonin CPN60-1, mitochondrial (577 aa).

The N-terminal 34 residues, 1 to 34 (MYRAAASLASKARQAGNSLATRQVGSRLAWSRNY), are a transit peptide targeting the mitochondrion.

Belongs to the chaperonin (HSP60) family.

The protein resides in the mitochondrion. Its function is as follows. Implicated in mitochondrial protein import and macromolecular assembly. May facilitate the correct folding of imported proteins. May also prevent misfolding and promote the refolding and proper assembly of unfolded polypeptides generated under stress conditions in the mitochondrial matrix. In Zea mays (Maize), this protein is Chaperonin CPN60-1, mitochondrial (CPN60I).